The primary structure comprises 396 residues: L-lactate dehydrogenase (396 aa).

Residues 1-380 (MIISAASDYR…SGDSLVQELG (380 aa)) form the FMN hydroxy acid dehydrogenase domain. Substrate is bound at residue Y24. FMN-binding residues include S106 and Q127. Y129 serves as a coordination point for substrate. T155 provides a ligand contact to FMN. Residue R164 participates in substrate binding. An FMN-binding site is contributed by K251. The Proton acceptor role is filled by H275. Substrate is bound at residue R278. 306–330 (DSGIRNGLDVVRMIALGADTVLLGR) serves as a coordination point for FMN.

The protein belongs to the FMN-dependent alpha-hydroxy acid dehydrogenase family. FMN serves as cofactor.

It is found in the cell inner membrane. It catalyses the reaction (S)-lactate + A = pyruvate + AH2. In terms of biological role, catalyzes the conversion of L-lactate to pyruvate. Is coupled to the respiratory chain. The polypeptide is L-lactate dehydrogenase (Salmonella choleraesuis (strain SC-B67)).